An 806-amino-acid polypeptide reads, in one-letter code: Ribonucleoside-diphosphate reductase large subunit (806 aa).

One can recognise an ATP-cone domain in the interval M1–D91. ATP is bound by residues N5–R6, E11–Q17, T52, and D56. S215 provides a ligand contact to GDP. Cysteines 216 and 442 form a disulfide. DTTP is bound by residues D224–I226, K241, R254, and R261–G262. A GDP-binding site is contributed by N425. The active-site Proton acceptor is the N425. Residue C427 is the Cysteine radical intermediate of the active site. Residues E429 and T604 to T607 each bind GDP. E429 serves as the catalytic Proton acceptor.

Belongs to the ribonucleoside diphosphate reductase large chain family. Heterodimer of a large and a small subunit.

It carries out the reaction a 2'-deoxyribonucleoside 5'-diphosphate + [thioredoxin]-disulfide + H2O = a ribonucleoside 5'-diphosphate + [thioredoxin]-dithiol. Under complex allosteric control mediated by deoxynucleoside triphosphates and ATP binding to separate specificity and activation sites on the large subunit. The type of nucleotide bound at the specificity site determines substrate preference. It seems probable that ATP makes the enzyme reduce CDP and UDP, dGTP favors ADP reduction and dTTP favors GDP reduction. Stimulated by ATP and inhibited by dATP binding to the activity site. Provides the precursors necessary for DNA synthesis. Catalyzes the biosynthesis of deoxyribonucleotides from the corresponding ribonucleotides. The protein is Ribonucleoside-diphosphate reductase large subunit (RNR1) of Plasmodium falciparum (isolate Dd2).